The following is a 222-amino-acid chain: MKFFIDTASLDEIKAANELGVLDGVTTNPSLIAKIVKDPANFTYADFKAHIKKICDIVDGPVSAEVTTLKAEEMIAQGEELAAIHENVVIKCPLTVEGLKAIKHFSSNGIKTNATLVFSPTQALLAAKAGADFVSPFVGRLDDISTNGMELVKQIVTIYDNYGYLTEVIVASVRNPLHVVESAMVGADIATIPYSVIKQLANHPLTDKGLEKFMEDAGVMKP.

K91 serves as the catalytic Schiff-base intermediate with substrate.

The protein belongs to the transaldolase family. Type 3B subfamily.

Its subcellular location is the cytoplasm. It carries out the reaction D-sedoheptulose 7-phosphate + D-glyceraldehyde 3-phosphate = D-erythrose 4-phosphate + beta-D-fructose 6-phosphate. The protein operates within carbohydrate degradation; pentose phosphate pathway; D-glyceraldehyde 3-phosphate and beta-D-fructose 6-phosphate from D-ribose 5-phosphate and D-xylulose 5-phosphate (non-oxidative stage): step 2/3. Functionally, transaldolase is important for the balance of metabolites in the pentose-phosphate pathway. The polypeptide is Probable transaldolase (Chlorobaculum parvum (strain DSM 263 / NCIMB 8327) (Chlorobium vibrioforme subsp. thiosulfatophilum)).